The chain runs to 135 residues: HTH-type transcriptional activator AarP (135 aa).

The HTH araC/xylS-type domain maps to 22 to 120 (SEILVWIEGN…GISPSLYRLS (99 aa)). DNA-binding regions (H-T-H motif) lie at residues 39 to 60 (DDIA…RKIV) and 87 to 110 (VIDI…KAYL).

Functionally, transcriptional activator of 2'-N-acetyltransferase. This Providencia stuartii protein is HTH-type transcriptional activator AarP (aarP).